The following is a 69-amino-acid chain: Cytochrome c oxidase subunit 8A, mitochondrial (69 aa).

The transit peptide at 1 to 25 directs the protein to the mitochondrion; it reads MSSLTPLLLRSLTGPARRLMVPRAQ. An SIFI-degron motif is present at residues 2–19; sequence SSLTPLLLRSLTGPARRL. Residues 26–36 lie on the Mitochondrial matrix side of the membrane; the sequence is VHSKPPREQLG. A helical transmembrane segment spans residues 37-60; sequence VLDITIGLTSCFVCCLLPAGWVLS. Residues 61 to 69 are Mitochondrial intermembrane-facing; the sequence is HLESYKKRE.

It belongs to the cytochrome c oxidase VIII family. As to quaternary structure, component of the cytochrome c oxidase (complex IV, CIV), a multisubunit enzyme composed of 14 subunits. The complex is composed of a catalytic core of 3 subunits MT-CO1, MT-CO2 and MT-CO3, encoded in the mitochondrial DNA, and 11 supernumerary subunits COX4I, COX5A, COX5B, COX6A, COX6B, COX6C, COX7A, COX7B, COX7C, COX8 and NDUFA4, which are encoded in the nuclear genome. The complex exists as a monomer or a dimer and forms supercomplexes (SCs) in the inner mitochondrial membrane with NADH-ubiquinone oxidoreductase (complex I, CI) and ubiquinol-cytochrome c oxidoreductase (cytochrome b-c1 complex, complex III, CIII), resulting in different assemblies (supercomplex SCI(1)III(2)IV(1) and megacomplex MCI(2)III(2)IV(2)). Post-translationally, in response to mitochondrial stress, the precursor protein is ubiquitinated by the SIFI complex in the cytoplasm before mitochondrial import, leading to its degradation. Within the SIFI complex, UBR4 initiates ubiquitin chain that are further elongated or branched by KCMF1.

The protein localises to the mitochondrion inner membrane. It functions in the pathway energy metabolism; oxidative phosphorylation. Its function is as follows. Component of the cytochrome c oxidase, the last enzyme in the mitochondrial electron transport chain which drives oxidative phosphorylation. The respiratory chain contains 3 multisubunit complexes succinate dehydrogenase (complex II, CII), ubiquinol-cytochrome c oxidoreductase (cytochrome b-c1 complex, complex III, CIII) and cytochrome c oxidase (complex IV, CIV), that cooperate to transfer electrons derived from NADH and succinate to molecular oxygen, creating an electrochemical gradient over the inner membrane that drives transmembrane transport and the ATP synthase. Cytochrome c oxidase is the component of the respiratory chain that catalyzes the reduction of oxygen to water. Electrons originating from reduced cytochrome c in the intermembrane space (IMS) are transferred via the dinuclear copper A center (CU(A)) of subunit 2 and heme A of subunit 1 to the active site in subunit 1, a binuclear center (BNC) formed by heme A3 and copper B (CU(B)). The BNC reduces molecular oxygen to 2 water molecules using 4 electrons from cytochrome c in the IMS and 4 protons from the mitochondrial matrix. The sequence is that of Cytochrome c oxidase subunit 8A, mitochondrial (Cox8a) from Rattus norvegicus (Rat).